The following is a 307-amino-acid chain: Capsid assembly scaffolding protein (307 aa).

Composition is skewed to acidic residues over residues Ile45–Thr54 and Glu83–Glu101. Residues Ile45–Pro105 form a disordered region.

It belongs to the T7likevirus capsid assembly scaffolding protein family.

Scaffolding protein involved in the icosahedric procapsid assembly. Coassembles with the capsid proteins to form the procapsid, in which the scaffolding protein is found within the external shell of icosahedrally arranged capsid protein subunits. In a subsequent step the scaffolding protein molecules are released from the procapsid. Facilitates assembly by binding to gp10 hexamers but not the pentamers and locking them into a morphogenically correct conformation. In Escherichia coli (Bacteriophage T7), this protein is Capsid assembly scaffolding protein.